The following is a 160-amino-acid chain: Putative antiporter subunit mnhE2 (160 aa).

The next 3 helical transmembrane spans lie at 22-42, 55-75, and 100-120; these read HFKF…IYIL, IWVA…SSIS, and SDWS…STVI.

The protein belongs to the CPA3 antiporters (TC 2.A.63) subunit E family. In terms of assembly, may form a heterooligomeric complex that consists of seven subunits: mnhA2, mnhB2, mnhC2, mnhD2, mnhE2, mnhF2 and mnhG2.

It is found in the cell membrane. The chain is Putative antiporter subunit mnhE2 (mnhE2) from Staphylococcus aureus (strain USA300).